Consider the following 813-residue polypeptide: Striatin-interacting protein 1 homolog (813 aa).

Disordered stretches follow at residues 1–41 (MDGV…SEAP) and 307–379 (RAAS…RDEV). Residues 9–18 (NNKQKQNQML) show a composition bias toward polar residues. Residues 22–35 (MRGEFTRNQRKDSE) are compositionally biased toward basic and acidic residues. A compositionally biased stretch (low complexity) spans 307–316 (RAASPPASAS). Phosphoserine is present on S310. Basic and acidic residues predominate over residues 331–352 (KALIKQDNLDTFNEKDPYKADD). Residues 353–367 (SHEDEEENDDNDNSL) show a composition bias toward acidic residues.

Belongs to the STRIP family. Part of the core of STRIPAK complexes composed of PP2A catalytic and scaffolding subunits, the striatins (PP2A regulatory subunits), the striatin-associated proteins MOB4, STRIP1 and STRIP2, PDCD10 and members of the STE20 kinases, such as STK24 and STK26.

It localises to the cytoplasm. Functionally, plays a role in the regulation of cell morphology and cytoskeletal organization. Required in the cortical actin filament dynamics and cell shape. Part of the striatin-interacting phosphatase and kinase (STRIPAK) complexes. STRIPAK complexes have critical roles in protein (de)phosphorylation and are regulators of multiple signaling pathways including Hippo, MAPK, nuclear receptor and cytoskeleton remodeling. Different types of STRIPAK complexes are involved in a variety of biological processes such as cell growth, differentiation, apoptosis, metabolism and immune regulation. The chain is Striatin-interacting protein 1 homolog (strip1) from Danio rerio (Zebrafish).